We begin with the raw amino-acid sequence, 152 residues long: Aspartate-rich protein (152 aa).

A signal peptide spans 1–19 (MQKLLLAVLFFSLLAVATA). Over residues 82–113 (ATPKTEAEPGSLDKGEGTKGEKGKEGKKEKGE) the composition is skewed to basic and acidic residues. The disordered stretch occupies residues 82–152 (ATPKTEAEPG…VHENDDENED (71 aa)). Over residues 135–152 (DDDDDRDDVHENDDENED) the composition is skewed to acidic residues.

Prismatic layer of shell (at protein level). Expressed primarily in the mantle with highest level in the mantle edge and lower level in the mantle pallium.

Its subcellular location is the secreted. The sequence is that of Aspartate-rich protein from Margaritifera margaritifera (Freshwater pearl mussel).